Consider the following 251-residue polypeptide: Large ribosomal subunit protein uL16m (251 aa).

A mitochondrion-targeting transit peptide spans 1-29 (MWRLLSGARAPVLRATLSDSWAAPPARAG).

Belongs to the universal ribosomal protein uL16 family. Component of the mitochondrial ribosome large subunit (39S) which comprises a 16S rRNA and about 50 distinct proteins.

It is found in the mitochondrion. The protein is Large ribosomal subunit protein uL16m (MRPL16) of Bos taurus (Bovine).